The sequence spans 515 residues: Zinc metalloproteinase-disintegrin-like EoMP06 (515 aa).

Residues 1–94 (VEDHCYYHGR…TLGLIVPPHG (94 aa)) constitute a propeptide that is removed on maturation. Gln95 carries the pyrrolidone carboxylic acid modification. Residues 100-296 (KFIELIIVVD…YNPKCIVDPP (197 aa)) enclose the Peptidase M12B domain. Position 103 (Glu103) interacts with Ca(2+). Asn160 carries an N-linked (GlcNAc...) asparagine glycan. Residue Asp187 coordinates Ca(2+). 2 N-linked (GlcNAc...) asparagine glycosylation sites follow: Asn194 and Asn225. 3 disulfides stabilise this stretch: Cys211–Cys291, Cys251–Cys275, and Cys253–Cys258. His236 provides a ligand contact to Zn(2+). Glu237 is an active-site residue. Zn(2+) contacts are provided by His240 and His246. Ca(2+)-binding residues include Cys291, Val306, Asn309, Val311, Glu313, Glu316, and Asp319. One can recognise a Disintegrin domain in the interval 304–390 (PAVCGNGVWE…ECPRNEFQRN (87 aa)). 14 cysteine pairs are disulfide-bonded: Cys307-Cys336, Cys318-Cys331, Cys320-Cys326, Cys330-Cys353, Cys344-Cys350, Cys349-Cys375, Cys362-Cys382, Cys369-Cys401, Cys394-Cys406, Cys413-Cys466, Cys428-Cys477, Cys441-Cys454, Cys461-Cys503, and Cys497-Cys508. A D/ECD-tripeptide motif is present at residues 368–370 (DCD). The Ca(2+) site is built by Asp370, Val371, and Asn385.

The protein belongs to the venom metalloproteinase (M12B) family. P-III subfamily. P-IIIa sub-subfamily. As to quaternary structure, monomer. It depends on Zn(2+) as a cofactor. Expressed by the venom gland.

The protein resides in the secreted. Snake venom zinc metalloproteinase that catalyzes the conversion of prothrombin (F2) to alpha-thrombin through formation of a thrombin intermediate, thereby functioning as a procoagulant protein. The sequence is that of Zinc metalloproteinase-disintegrin-like EoMP06 from Echis ocellatus (Ocellated saw-scaled viper).